A 449-amino-acid chain; its full sequence is Phosphoglucosamine mutase (449 aa).

The Phosphoserine intermediate role is filled by Ser-101. Positions 101, 241, 243, and 245 each coordinate Mg(2+). Ser-101 carries the phosphoserine modification.

The protein belongs to the phosphohexose mutase family. The cofactor is Mg(2+). Activated by phosphorylation.

It carries out the reaction alpha-D-glucosamine 1-phosphate = D-glucosamine 6-phosphate. Catalyzes the conversion of glucosamine-6-phosphate to glucosamine-1-phosphate. The sequence is that of Phosphoglucosamine mutase from Acetivibrio thermocellus (strain ATCC 27405 / DSM 1237 / JCM 9322 / NBRC 103400 / NCIMB 10682 / NRRL B-4536 / VPI 7372) (Clostridium thermocellum).